The sequence spans 358 residues: Chondroadherin (358 aa).

The N-terminal stretch at 1 to 20 (MARALLFSLVFLAILLPALA) is a signal peptide. Positions 21–50 (ACPQNCHCHGDLQHVICDKVGLQKIPKVSE) constitute an LRRNT domain. A disulfide bond links cysteine 22 and cysteine 37. LRR repeat units follow at residues 51–72 (TTKL…SFRT), 75–96 (NLVS…AFRG), 99–120 (QLIY…AFDD), 123–144 (ELTY…LLSP), 147–168 (NLFI…AFQG), 171–192 (DLRW…SLDD), 195–216 (NLAK…ALSK), 219–240 (VVEE…AFQS), 244–265 (YLET…AFSG), and 268–289 (TLKH…FPFD). Serine 143 is a glycosylation site (O-linked (GalNAc...) serine). In terms of domain architecture, LRRCT spans 299-347 (NPWKCTCQLRGLRRWLEAKASRPDATCSSPAKFKGQRIRDTDALRSCKS). 2 cysteine pairs are disulfide-bonded: cysteine 303–cysteine 345 and cysteine 305–cysteine 325. Residues 322–358 (DATCSSPAKFKGQRIRDTDALRSCKSPTKRSKKAGRH) are disordered. Residues 348-358 (PTKRSKKAGRH) show a composition bias toward basic residues.

Belongs to the small leucine-rich proteoglycan (SLRP) family. SLRP class IV subfamily. Mostly monomeric. Interacts with collagen type II. Cartilage.

The protein resides in the secreted. The protein localises to the extracellular space. It localises to the extracellular matrix. Functionally, promotes attachment of chondrocytes, fibroblasts, and osteoblasts. This binding is mediated (at least for chondrocytes and fibroblasts) by the integrin alpha(2)beta(1). May play an important role in the regulation of chondrocyte growth and proliferation. In Mus musculus (Mouse), this protein is Chondroadherin (Chad).